The following is a 61-amino-acid chain: Conotoxin 3 (61 aa).

The signal sequence occupies residues 1-21 (MRCLPVFVILLLLIASVPSDA). Residues 22–48 (VQLKTKDDMPLPSFNGNARRTPRMLSN) constitute a propeptide that is removed on maturation. Trp58 is subject to 6'-bromotryptophan.

Belongs to the conotoxin T superfamily. Contains 2 disulfide bonds that can be either 'C1-C3, C2-C4' or 'C1-C4, C2-C3', since these disulfide connectivities have been observed for conotoxins with cysteine framework V (for examples, see AC P0DQQ7 and AC P81755). In terms of processing, contains 2 disulfide bonds. Expressed by the venom duct.

It is found in the secreted. In Conus textile (Cloth-of-gold cone), this protein is Conotoxin 3.